The sequence spans 347 residues: NADH-ubiquinone oxidoreductase chain 2 (347 aa).

A run of 10 helical transmembrane segments spans residues 1-21, 25-45, 59-79, 96-116, 122-142, 149-169, 200-220, 239-259, 274-294, and 325-345; these read MNPSIFIILLTTLILGTMMVI, HWLLAWIGFEMNMMAFIPIMM, YLLTQATASALLMMAVIINLM, TLMTVALAIKLGLAPFHFWVP, IPLTTGLILLTWQKLAPLSIL, INLYLMLTMSLLSILVGGWGG, LTLLNLLIYITMTFTMFMLFI, IITTLTMLTLLSMGGLPPLSG, DILIMPTFMAITALLNLYFYM, and LLPTAIVISTMLLPLTPMLSI.

Belongs to the complex I subunit 2 family. In terms of assembly, core subunit of respiratory chain NADH dehydrogenase (Complex I) which is composed of 45 different subunits. Interacts with TMEM242.

The protein localises to the mitochondrion inner membrane. The enzyme catalyses a ubiquinone + NADH + 5 H(+)(in) = a ubiquinol + NAD(+) + 4 H(+)(out). In terms of biological role, core subunit of the mitochondrial membrane respiratory chain NADH dehydrogenase (Complex I) which catalyzes electron transfer from NADH through the respiratory chain, using ubiquinone as an electron acceptor. Essential for the catalytic activity and assembly of complex I. This is NADH-ubiquinone oxidoreductase chain 2 from Balaenoptera musculus (Blue whale).